A 406-amino-acid chain; its full sequence is Dihydroorotase, mitochondrial (406 aa).

The transit peptide at 1 to 41 (MQTAATSTFFANPHVKHLPGPFLRPSPHYGALVHLPSFRNK) directs the protein to the mitochondrion. H69, H71, K155, H193, H231, and D305 together coordinate Zn(2+). K155 is modified (N6-carboxylysine).

It belongs to the metallo-dependent hydrolases superfamily. DHOase family. Class II DHOase subfamily. Zn(2+) serves as cofactor.

It is found in the mitochondrion. It carries out the reaction (S)-dihydroorotate + H2O = N-carbamoyl-L-aspartate + H(+). The protein operates within pyrimidine metabolism; UMP biosynthesis via de novo pathway; (S)-dihydroorotate from bicarbonate: step 3/3. In Oryza sativa subsp. japonica (Rice), this protein is Dihydroorotase, mitochondrial (PYRC).